Here is a 241-residue protein sequence, read N- to C-terminus: Beta-nerve growth factor (241 aa).

An N-terminal signal peptide occupies residues 1–18 (MSMLFYTLITAFLIGVQA). A propeptide spanning residues 19 to 121 (EPYTDSNVPE…SFNRTHRSKR (103 aa)) is cleaved from the precursor. N69, N114, and N166 each carry an N-linked (GlcNAc...) asparagine glycan. Intrachain disulfides connect C136/C201, C179/C229, and C189/C231. A 1-acyl-sn-glycero-3-phospho-(1D-myo-inositol) is bound by residues Y173 and K209. K209 lines the a 1-acyl-sn-glycero-3-phospho-L-serine pocket.

This sequence belongs to the NGF-beta family. As to quaternary structure, homodimer. The homodimer interacts with a single NTRK1 chain. The homodimer interacts with a single NGFR chain. The NGF dimer interacts with a single SORCS2 chain (via extracellular domain). The NGF precursor (proNGF) binds to a receptor complex formed by SORT1 and NGFR, which leads to NGF endocytosis. Both mature NGF and the immature NGF precursor (proNGF) interact with SORCS2 and with the heterodimer formed by SORCS2 and NGFR (via extracellular domains). The NGF precursor (proNGF) has much higher affinity for SORCS2 than mature NGF. The NGF precursor (proNGF) has much higher affinity for SORT1 than mature NGF. Interacts with ADAM10 in a divalent cation-dependent manner. Interacts with SORCS3. As to expression, detected in the granule and pyramidal cell layer in the hippocampus.

Its subcellular location is the secreted. It is found in the endosome lumen. Nerve growth factor is important for the development and maintenance of the sympathetic and sensory nervous systems. Extracellular ligand for the NTRK1 and NGFR receptors, activates cellular signaling cascades to regulate neuronal proliferation, differentiation and survival. The immature NGF precursor (proNGF) functions as a ligand for the heterodimeric receptor formed by SORCS2 and NGFR, and activates cellular signaling cascades that lead to inactivation of RAC1 and/or RAC2, reorganization of the actin cytoskeleton and neuronal growth cone collapse. In contrast to mature NGF, the precursor form (proNGF) promotes neuronal apoptosis (in vitro). Inhibits metalloproteinase-dependent proteolysis of platelet glycoprotein VI. Binds lysophosphatidylinositol and lysophosphatidylserine between the two chains of the homodimer. The lipid-bound form promotes histamine relase from mast cells, contrary to the lipid-free form. This is Beta-nerve growth factor (Ngf) from Rattus norvegicus (Rat).